Reading from the N-terminus, the 540-residue chain is Acrosin-binding protein (540 aa).

The N-terminal stretch at 1–24 (MKLAASFLLMLLEVLLLPETPLSA) is a signal peptide. Positions 25-104 (EEALASTPGS…ASWFESFCQF (80 aa)) are pro-ACR binding. Positions 25–272 (EEALASTPGS…NPSFFTPRVR (248 aa)) are cleaved as a propeptide — removed in mature form. Residues 181 to 266 (SLSLGGKEQQ…SKSLSSNPSF (86 aa)) form a disordered region. Basic and acidic residues predominate over residues 195 to 213 (LGLEQQHKQEQIQEHKLEE). Over residues 214-241 (AQEQEEQEEEEEEEEAKQEEGQGTEEGL) the composition is skewed to acidic residues. Polar residues predominate over residues 256–266 (QSKSLSSNPSF). A pro-ACR binding region spans residues 316 to 424 (LPHTETLMVL…NQAKIPEKGR (109 aa)).

As to quaternary structure, binds pro-ACR. Does not bind the mature form of ACR. Binds pro-ACR. Does not bind mature form of ACR. Post-translationally, the N-terminus is blocked. In terms of processing, phosphorylated on Tyr residues in capacitated sperm. Synthesized as a 60-kDa precursor, the 32-kDa mature form is post-translationally produced by the removal of the N-terminal half of the precursor during sperm maturation in the testis and/or epididymis.

It localises to the cytoplasmic vesicle. The protein localises to the secretory vesicle. It is found in the acrosome. Acrosomal protein that maintains proacrosin (pro-ACR) as an enzymatically inactive zymogen in the acrosome. Involved also in the acrosome formation. Its function is as follows. Maintains pro-ACR as an enzymatically inactive zymogen in the acrosome until acrosomal exocytosis. Partially also contributes to the assembly of acrosomal proteins to form an acrosomal granule. In terms of biological role, rodent specific isoform that participates in the formation of the acrosomal granule into the center of the acrosomal vesicle during early spermiogenesis. In the fertilization process promotes ACR release from the acrosome during acrosomal exocytosis. The sequence is that of Acrosin-binding protein from Rattus norvegicus (Rat).